Consider the following 234-residue polypeptide: MDELLRIATSWGLRLDQRQIEQFARYSAELRAWNMRVNLTSITDEREIVTRHFLDSLRCALSWGDTPSRLIDIGSGAGFPGLPLKILHPELHVTLVESVGKKAAFLQHIVAVLDLRDVTVVTARAEVVGRDPQHREQYDVVTARAVAELATLVEYGLPLCRIGGRFLAPKGSAIDDEVVRARIAIARLGGQVIGVEPVEIPGVELRTLVVIVKVAPTPAAYPRAVGIPAKRPIL.

Residues glycine 74, phenylalanine 79, 125–126 (AE), and arginine 144 each bind S-adenosyl-L-methionine.

Belongs to the methyltransferase superfamily. RNA methyltransferase RsmG family.

It is found in the cytoplasm. Functionally, specifically methylates the N7 position of a guanine in 16S rRNA. This is Ribosomal RNA small subunit methyltransferase G from Roseiflexus castenholzii (strain DSM 13941 / HLO8).